We begin with the raw amino-acid sequence, 548 residues long: Undecaprenyl phosphate-alpha-4-amino-4-deoxy-L-arabinose arabinosyl transferase 1 (548 aa).

The next 12 helical transmembrane spans lie at 11–31 (WLLF…TRLL), 89–109 (IVVV…AMVV), 114–134 (ALAF…AIGT), 137–157 (ILDP…LVAL), 180–200 (FLTK…VMAI), 214–234 (IALL…ALQA), 263–283 (FYIP…FGAL), 292–312 (GTLY…ASKG), 314–334 (LLTY…HYIE), 347–367 (VNAS…IYSL), 382–402 (KIVL…GALF), and 405–425 (TQFL…YAIP).

This sequence belongs to the glycosyltransferase 83 family.

Its subcellular location is the cell inner membrane. The catalysed reaction is 4-amino-4-deoxy-alpha-L-arabinopyranosyl di-trans,octa-cis-undecaprenyl phosphate + lipid IVA = lipid IIA + di-trans,octa-cis-undecaprenyl phosphate.. The protein operates within lipopolysaccharide metabolism; 4-amino-4-deoxy-beta-L-arabinose-lipid A biosynthesis. Catalyzes the transfer of the L-Ara4N moiety of the glycolipid undecaprenyl phosphate-alpha-L-Ara4N to lipid A. The modified arabinose is attached to lipid A and is required for resistance to polymyxin and cationic antimicrobial peptides. This Proteus mirabilis (strain HI4320) protein is Undecaprenyl phosphate-alpha-4-amino-4-deoxy-L-arabinose arabinosyl transferase 1.